Here is a 106-residue protein sequence, read N- to C-terminus: MNDSEFHRLADTLWLTIEERLDDWDGDSDIDCEINGGVLTITFENGSKIIINRQEPLHQVWLATKQGGYHFDLKGDEWICDRSGETFWDLLEQAATQQAGETVSFR.

This sequence belongs to the frataxin family.

In terms of biological role, involved in iron-sulfur (Fe-S) cluster assembly. May act as a regulator of Fe-S biogenesis. In Escherichia fergusonii (strain ATCC 35469 / DSM 13698 / CCUG 18766 / IAM 14443 / JCM 21226 / LMG 7866 / NBRC 102419 / NCTC 12128 / CDC 0568-73), this protein is Iron-sulfur cluster assembly protein CyaY.